Here is a 518-residue protein sequence, read N- to C-terminus: Nitrogenase iron-iron protein alpha chain (518 aa).

The [8Fe-7S] cluster site is built by cysteine 49 and cysteine 75. Residues cysteine 257 and histidine 423 each coordinate [8Fe-9S-C-homocitryl] cluster.

Hexamer of two alpha, two beta, and two delta chains. Requires [8Fe-7S] cluster as cofactor. [8Fe-9S-C-homocitryl] cluster is required as a cofactor.

The catalysed reaction is N2 + 8 reduced [2Fe-2S]-[ferredoxin] + 16 ATP + 16 H2O = H2 + 8 oxidized [2Fe-2S]-[ferredoxin] + 2 NH4(+) + 16 ADP + 16 phosphate + 6 H(+). Its function is as follows. This iron-iron protein is part of the nitrogenase complex that catalyzes the key enzymatic reactions in nitrogen fixation. Other nitrogenase complexes utilize a molybdenum-iron protein or a vanadium-iron protein. The chain is Nitrogenase iron-iron protein alpha chain (anfD) from Ruminiclostridium hungatei (Clostridium hungatei).